Reading from the N-terminus, the 365-residue chain is Putative DNA-directed RNA polymerase subunit alpha-like 3 (365 aa).

It belongs to the RNA polymerase alpha chain family. In terms of assembly, in plastids the minimal PEP RNA polymerase catalytic core is composed of four subunits: alpha, beta, beta', and beta''. When a (nuclear-encoded) sigma factor is associated with the core the holoenzyme is formed, which can initiate transcription.

The protein localises to the plastid. It is found in the chloroplast. The enzyme catalyses RNA(n) + a ribonucleoside 5'-triphosphate = RNA(n+1) + diphosphate. DNA-dependent RNA polymerase catalyzes the transcription of DNA into RNA using the four ribonucleoside triphosphates as substrates. In Pelargonium hortorum (Common geranium), this protein is Putative DNA-directed RNA polymerase subunit alpha-like 3 (rpoAL3-A).